The primary structure comprises 91 residues: Transcription factor znf27 (91 aa).

It localises to the nucleus. In terms of biological role, transcription factor; part of the gene cluster 27 that mediates the biosynthesis of asparasone A, a sclerotium-specific anthraquinone pigment important for sclerotial survival. Controls the expression of the non-reducing polyketide synthase (NRPKS) pks27. This Aspergillus flavus (strain ATCC 200026 / FGSC A1120 / IAM 13836 / NRRL 3357 / JCM 12722 / SRRC 167) protein is Transcription factor znf27.